Consider the following 475-residue polypeptide: MSPQTETKASVGFKAGVKDYKLTYYTPEYETKPTDILAAFRVTPQPGVPPEEAGAAVAAESSTGTWTTVWTDGLTSLDRYKGRCYHIEPVAGEESQFIAYVAYPLDLFEEGSVTNMFTSIVGNVFGFKALRALRLEDLRIPPAYSKTFQGPPHGIQVERDKLNKYGRPLLGCTIKPKLGLSAKNYGRAVYECLRGGLDFTKDDENVNSQPFMRWRDRFLFCAEAIFKSQAETGEIKGHYLNATAGTCEEMIKRAVFARELGVPIVMHDYLTGGFTANTSLAHYCRDNGLLLHIHRAMHAVIDRQKNHGMHFRVLAKALRLSGGDHIHAGTVVGKLEGEREITLGFVDLLRDDFVEKDRSRGIYFTQDWVSLPGVLPVASGGIHVWHMPALTEIFGDDSVLQFGGGTLGHPWGNAPGAVANRVALEACVQARNEGRDLAREGNEIIRAASKWSPELAAACEVWKEIKFEFPAMDTL.

The propeptide occupies 1–2; the sequence is MS. Residue proline 3 is modified to N-acetylproline. Position 14 is an N6,N6,N6-trimethyllysine (lysine 14). The substrate site is built by asparagine 123 and threonine 173. Lysine 175 (proton acceptor) is an active-site residue. Residue lysine 177 participates in substrate binding. Lysine 201, aspartate 203, and glutamate 204 together coordinate Mg(2+). An N6-carboxylysine modification is found at lysine 201. The active-site Proton acceptor is histidine 294. The substrate site is built by arginine 295, histidine 327, and serine 379.

This sequence belongs to the RuBisCO large chain family. Type I subfamily. In terms of assembly, heterohexadecamer of 8 large chains and 8 small chains; disulfide-linked. The disulfide link is formed within the large subunit homodimers. It depends on Mg(2+) as a cofactor. In terms of processing, the disulfide bond which can form in the large chain dimeric partners within the hexadecamer appears to be associated with oxidative stress and protein turnover.

The protein localises to the plastid. Its subcellular location is the chloroplast. The catalysed reaction is 2 (2R)-3-phosphoglycerate + 2 H(+) = D-ribulose 1,5-bisphosphate + CO2 + H2O. It catalyses the reaction D-ribulose 1,5-bisphosphate + O2 = 2-phosphoglycolate + (2R)-3-phosphoglycerate + 2 H(+). Its function is as follows. RuBisCO catalyzes two reactions: the carboxylation of D-ribulose 1,5-bisphosphate, the primary event in carbon dioxide fixation, as well as the oxidative fragmentation of the pentose substrate in the photorespiration process. Both reactions occur simultaneously and in competition at the same active site. This is Ribulose bisphosphate carboxylase large chain from Vitis vinifera (Grape).